Consider the following 133-residue polypeptide: MSVNDPIGDMLTRIRNACMARHTTVSMPASNMKEAIARILKREGFIRDYAVIDDGKSHKTITITLKYLPDRRPAITGLRRVSKPGLRIYTKRTDIPRVRGGLGLCILSTPKGVLADHEAWRERVGGEVLCYVW.

Belongs to the universal ribosomal protein uS8 family. Part of the 30S ribosomal subunit. Contacts proteins S5 and S12.

Its function is as follows. One of the primary rRNA binding proteins, it binds directly to 16S rRNA central domain where it helps coordinate assembly of the platform of the 30S subunit. This Chloroflexus aurantiacus (strain ATCC 29364 / DSM 637 / Y-400-fl) protein is Small ribosomal subunit protein uS8.